The sequence spans 223 residues: Phosphoribosylformylglycinamidine synthase subunit PurQ (223 aa).

Residues 2 to 223 (KTAIIQLPGL…FQSALELAKG (222 aa)) form the Glutamine amidotransferase type-1 domain. C86 acts as the Nucleophile in catalysis. Active-site residues include H196 and E198.

As to quaternary structure, part of the FGAM synthase complex composed of 1 PurL, 1 PurQ and 2 PurS subunits.

It localises to the cytoplasm. It catalyses the reaction N(2)-formyl-N(1)-(5-phospho-beta-D-ribosyl)glycinamide + L-glutamine + ATP + H2O = 2-formamido-N(1)-(5-O-phospho-beta-D-ribosyl)acetamidine + L-glutamate + ADP + phosphate + H(+). The catalysed reaction is L-glutamine + H2O = L-glutamate + NH4(+). The protein operates within purine metabolism; IMP biosynthesis via de novo pathway; 5-amino-1-(5-phospho-D-ribosyl)imidazole from N(2)-formyl-N(1)-(5-phospho-D-ribosyl)glycinamide: step 1/2. Functionally, part of the phosphoribosylformylglycinamidine synthase complex involved in the purines biosynthetic pathway. Catalyzes the ATP-dependent conversion of formylglycinamide ribonucleotide (FGAR) and glutamine to yield formylglycinamidine ribonucleotide (FGAM) and glutamate. The FGAM synthase complex is composed of three subunits. PurQ produces an ammonia molecule by converting glutamine to glutamate. PurL transfers the ammonia molecule to FGAR to form FGAM in an ATP-dependent manner. PurS interacts with PurQ and PurL and is thought to assist in the transfer of the ammonia molecule from PurQ to PurL. The chain is Phosphoribosylformylglycinamidine synthase subunit PurQ from Bartonella henselae (strain ATCC 49882 / DSM 28221 / CCUG 30454 / Houston 1) (Rochalimaea henselae).